The sequence spans 557 residues: MDGIVPDIAVGTKRGSDELFSACVTNGPFIMSGTSASTANGNDSKKFKGDSRSAGVPSRVIHIRKLPGDVTEGEVISLGLPFGKVTNLLMLKGKNQAFIEMHTEEAANTMVNYYTSVTPVLRGQPIYIQFSNHKELKTDSSPNQARAQAALQAVNSVQSGNLALAASAAAVDAGMAMAGQSPVLRIIVENLFYPVTLDVLHQIFSKFGTVLKIITFTKNNQFQALLQYADPVSAQHAKLSLDGQNIYNACCTLRIDFSKLTSLNVKYNNDKSRDYTRPDLPSGDSQPSLDQTMAAAFGAPGIMSASPYAGAGFPPTFAIPQAAGLSVPNVHGALAPLAIPSAAAAAAAAGRIAIPGLAGAGNSVLLVSNLNPERVTPQSLFILFGVYGDVQRVKVLFNKKENALVQMADGSQAQLAMSHLNGHKLHGKPVRITLSKHQSVQLPREGQEDQGLTKDYGNSPLHRFKKPGSKNFQNIFPPSATLHLSNIPPSISEDDLKILFSSNGGIVKGFKFFQKDRKMALIQMGSVEEAIQALIDLHNHDLGENHHLRVSFSKSTI.

Position 1 is an N-acetylmethionine (Met-1). Ser-16 is modified (phosphoserine). RRM domains are found at residues 59–143, 184–260, and 363–437; these read RVIH…SSPN, LRII…FSKL, and SVLL…LSKH. Residue Lys-65 forms a Glycyl lysine isopeptide (Lys-Gly) (interchain with G-Cter in SUMO2) linkage. Tyr-127 bears the Phosphotyrosine mark. The residue at position 138 (Thr-138) is a Phosphothreonine. The residue at position 141 (Ser-141) is a Phosphoserine. Residue Lys-218 forms a Glycyl lysine isopeptide (Lys-Gly) (interchain with G-Cter in SUMO2) linkage. The interval 437–460 is disordered; that stretch reads HQSVQLPREGQEDQGLTKDYGNSP. Ser-459 carries the phosphoserine modification. Positions 480–555 constitute an RRM 4 domain; it reads ATLHLSNIPP…HHLRVSFSKS (76 aa).

As to quaternary structure, monomer. Part of a ternary complex containing KHSRP, PTBP1, PTBP2 and HNRPH1. Interacts with RAVER1 and SFPQ.

It localises to the nucleus. Its function is as follows. Plays a role in pre-mRNA splicing and in the regulation of alternative splicing events. Activates exon skipping of its own pre-mRNA during muscle cell differentiation. Binds to the polypyrimidine tract of introns. May promote RNA looping when bound to two separate polypyrimidine tracts in the same pre-mRNA. May promote the binding of U2 snRNP to pre-mRNA. Cooperates with RAVER1 to modulate switching between mutually exclusive exons during maturation of the TPM1 pre-mRNA. Represses the splicing of MAPT/Tau exon 10. Binds to polypyrimidine-rich controlling element (PCE) of CFTR and promotes exon skipping of CFTR exon 9, thereby antagonizing TIA1 and its role in exon inclusion of CFTR exon 9. Plays a role in the splicing of pyruvate kinase PKM by binding repressively to a polypyrimidine tract flanking PKM exon 9, inhibiting exon 9 inclusion and resulting in exon 10 inclusion and production of the PKM M2 isoform. The polypeptide is Polypyrimidine tract-binding protein 1 (PTBP1) (Bos taurus (Bovine)).